Reading from the N-terminus, the 309-residue chain is Small ribosomal subunit biogenesis GTPase RsgA (309 aa).

A CP-type G domain is found at 88 to 247; it reads KNLITRPPVA…IADTPGFNKP (160 aa). Residues 137 to 140 and 189 to 197 contribute to the GTP site; these read TKRD and GPSGVGKSS. Residues Cys272, Cys277, His279, and Cys285 each contribute to the Zn(2+) site.

The protein belongs to the TRAFAC class YlqF/YawG GTPase family. RsgA subfamily. In terms of assembly, monomer. Associates with 30S ribosomal subunit, binds 16S rRNA. Zn(2+) serves as cofactor.

It is found in the cytoplasm. Its function is as follows. One of several proteins that assist in the late maturation steps of the functional core of the 30S ribosomal subunit. Helps release RbfA from mature subunits. May play a role in the assembly of ribosomal proteins into the subunit. Circularly permuted GTPase that catalyzes slow GTP hydrolysis, GTPase activity is stimulated by the 30S ribosomal subunit. This Prochlorococcus marinus (strain SARG / CCMP1375 / SS120) protein is Small ribosomal subunit biogenesis GTPase RsgA.